Consider the following 590-residue polypeptide: Arginine--tRNA ligase (590 aa).

Residues 132–142 (PNTNKPLHLGH) carry the 'HIGH' region motif.

The protein belongs to the class-I aminoacyl-tRNA synthetase family. Monomer.

Its subcellular location is the cytoplasm. It catalyses the reaction tRNA(Arg) + L-arginine + ATP = L-arginyl-tRNA(Arg) + AMP + diphosphate. In Treponema denticola (strain ATCC 35405 / DSM 14222 / CIP 103919 / JCM 8153 / KCTC 15104), this protein is Arginine--tRNA ligase.